Consider the following 603-residue polypeptide: F-box only protein 46 (603 aa).

The interval 18–54 (SKYSQNQPRPPSTALKPPVCPDTSSGTEPDHRPAHLE) is disordered. 2 positions are modified to phosphoserine: Ser-21 and Ser-67. Disordered stretches follow at residues 113–165 (SRAS…SSGD), 235–301 (EAQR…TRAK), 332–359 (EASEGETPAPTRPEDTPPAPPPPPARDC), and 412–442 (QSRGPEGPPEPPPADIPSTVPGPDDSEGTTD). Thr-347 bears the Phosphothreonine mark. Composition is skewed to pro residues over residues 347 to 356 (TPPAPPPPPA) and 417 to 426 (EGPPEPPPAD). An F-box domain is found at 470-522 (RQYMLLLPEHVLVKIFSFLPTRALAALKCTCHHFKGIIEAFGVRATDSRWSRD).

Part of a SCF (SKP1-cullin-F-box) protein ligase complex SCF(FBXO46) composed of CUL1, SKP1, RBX1 and FBXO46. In terms of processing, phosphorylated by ATM in response to DNA damage, promoting ubiquitination and degradation by the SCF(FBXO31) complex. ATM-phosphorylated FBXO46 is ubiquitinated and degradaded by the SCF(FBXO31) complex in response to DNA damage.

It participates in protein modification; protein ubiquitination. In terms of biological role, substrate-recognition component of the SCF(FBXO46) protein ligase complex, which mediates the ubiquitination and degradation of target proteins. In absence of stress, the SCF(FBXO46) complex catalyzes ubiquitination and degradation of MTOR-phosphorylated FBXO31. The sequence is that of F-box only protein 46 (Fbxo46) from Mus musculus (Mouse).